The primary structure comprises 398 residues: MDLQLKQWRSQQQQQHQTESEEQPSAAKIPKHVFDQIHSHTATSTALPLFTPEPTSSKLSSLSPDSSSRFPKMGSFFSWAQWQELELQALIYRYMLAGAAVPQELLLPIKKSLLHLSPSYFLHHPLQHLPHYQPAWYLGRAAMDPEPGRCRRTDGKKWRCSRDVFAGHKYCERHMHRGRNRSRKPVETPTTVNATATSMASSVAAAATTTTATTTSTFAFGGGGGSEEVVGQGGSFFFSGSSNSSSELLHLSQSCSEMKQESNNMNNKRPYESHIGFSNNRSDGGHILRPFFDDWPRSSLQEADNSSSPMSSATCLSISMPGNSSSDVSLKLSTGNEEGARSNNNGRDQQNMSWWSGGGSNHHHHNMGGPLAEALRSSSSSSPTSVLHQLGVSTQAFH.

Residues 1–17 (MDLQLKQWRSQQQQQHQ) are compositionally biased toward low complexity. A disordered region spans residues 1-32 (MDLQLKQWRSQQQQQHQTESEEQPSAAKIPKH). The QLQ domain occupies 76–111 (FFSWAQWQELELQALIYRYMLAGAAVPQELLLPIKK). Residues 144–188 (DPEPGRCRRTDGKKWRCSRDVFAGHKYCERHMHRGRNRSRKPVET) enclose the WRC domain. 2 consecutive short sequence motifs (bipartite nuclear localization signal) follow at residues 149-159 (RCRRTDGKKWR) and 177-184 (RGRNRSRK). 2 stretches are compositionally biased toward polar residues: residues 299-350 (SLQE…RDQQ) and 383-398 (PTSV…QAFH). A disordered region spans residues 299-398 (SLQEADNSSS…QLGVSTQAFH (100 aa)).

Belongs to the GRF family. In terms of tissue distribution, strongly expressed in actively growing and developing tissues, such as roots, upper stems, and shoot tips containing the shoot apical meristem (SAM) and flower buds. Also expressed in mature flowers, but weakly expressed in mature stems and leaves.

The protein localises to the nucleus. Functionally, transcription activator that plays a role in the regulation of cell expansion in leaf and cotyledons tissues. Component of a network formed by miR396, the GRFs and their interacting factors (GIFs) acting in the regulation of meristem function, at least partially through the control of cell proliferation. microRNA396-GRF1/GRF3 regulatory module acts as a developmental regulator in the reprogramming of root cells during cyst nematode infection, leading to the formation of the syncytium. This Arabidopsis thaliana (Mouse-ear cress) protein is Growth-regulating factor 3 (GRF3).